We begin with the raw amino-acid sequence, 664 residues long: L-type lectin-domain containing receptor kinase I.3 (664 aa).

Positions 1-21 (MACRLYLALIFSCVYLICLSS) are cleaved as a signal peptide. The Extracellular segment spans residues 22–286 (QQETGFVYNG…PKEEKKKLSP (265 aa)). Positions 24–257 (ETGFVYNGFE…NHYILGWSFS (234 aa)) are legume-lectin like. 7 N-linked (GlcNAc...) asparagine glycosylation sites follow: asparagine 55, asparagine 125, asparagine 128, asparagine 181, asparagine 204, asparagine 225, and asparagine 267. Residues 287–307 (LLIGLVILLVIPVVMVLGGVY) form a helical membrane-spanning segment. The Cytoplasmic portion of the chain corresponds to 308 to 664 (WYRRKKYAEV…THTILDGHGR (357 aa)). The region spanning 342 to 619 (FRKDCRVGKG…LNQDLPLPIF (278 aa)) is the Protein kinase domain. ATP contacts are provided by residues 348–356 (VGKGGFGEV) and lysine 370. Aspartate 466 (proton acceptor) is an active-site residue.

The protein in the C-terminal section; belongs to the protein kinase superfamily. Ser/Thr protein kinase family. It in the N-terminal section; belongs to the leguminous lectin family. In terms of processing, autophosphorylated on Ser and Thr residues. As to expression, mostly expressed in roots and flowers, and, to a lower extent, in leaves.

It localises to the cell membrane. The catalysed reaction is L-seryl-[protein] + ATP = O-phospho-L-seryl-[protein] + ADP + H(+). It carries out the reaction L-threonyl-[protein] + ATP = O-phospho-L-threonyl-[protein] + ADP + H(+). Involved in resistance response to the pathogenic fungus Alternaria brassicicola. The polypeptide is L-type lectin-domain containing receptor kinase I.3 (Arabidopsis thaliana (Mouse-ear cress)).